The primary structure comprises 213 residues: Phosphoribosyl-dephospho-CoA transferase (213 aa).

Residues D135 and D137 contribute to the active site.

The protein belongs to the MdcG family.

The catalysed reaction is apo-[malonate decarboxylase ACP] + 2'-(5''-triphospho-alpha-D-ribosyl)-3'-dephospho-CoA = holo-[malonate decarboxylase ACP] + diphosphate. In terms of biological role, transfers 2'-(5-triphosphoribosyl)-3'-dephosphocoenzyme-A to the apo-[acyl-carrier-protein] of the malonate decarboxylase to yield holo-[acyl-carrier-protein]. The chain is Phosphoribosyl-dephospho-CoA transferase from Xanthomonas axonopodis pv. citri (strain 306).